The chain runs to 393 residues: Enoyl-[acyl-carrier-protein] reductase [NADH] (393 aa).

Residues Gly-48–Tyr-53, Phe-74–Glu-75, Asp-111–Ala-112, and Leu-139–Ala-140 each bind NAD(+). Tyr-225 is a substrate binding site. The active-site Proton donor is Tyr-235. Residues Lys-244 and Leu-273–Thr-275 contribute to the NAD(+) site.

This sequence belongs to the TER reductase family. As to quaternary structure, monomer.

The enzyme catalyses a 2,3-saturated acyl-[ACP] + NAD(+) = a (2E)-enoyl-[ACP] + NADH + H(+). It participates in lipid metabolism; fatty acid biosynthesis. Involved in the final reduction of the elongation cycle of fatty acid synthesis (FAS II). Catalyzes the reduction of a carbon-carbon double bond in an enoyl moiety that is covalently linked to an acyl carrier protein (ACP). This chain is Enoyl-[acyl-carrier-protein] reductase [NADH], found in Pseudoalteromonas atlantica (strain T6c / ATCC BAA-1087).